The primary structure comprises 235 residues: 2,3,4,5-tetrahydropyridine-2,6-dicarboxylate N-acetyltransferase (235 aa).

This sequence belongs to the transferase hexapeptide repeat family. DapH subfamily.

It carries out the reaction (S)-2,3,4,5-tetrahydrodipicolinate + acetyl-CoA + H2O = L-2-acetamido-6-oxoheptanedioate + CoA. It functions in the pathway amino-acid biosynthesis; L-lysine biosynthesis via DAP pathway; LL-2,6-diaminopimelate from (S)-tetrahydrodipicolinate (acetylase route): step 1/3. In terms of biological role, catalyzes the transfer of an acetyl group from acetyl-CoA to tetrahydrodipicolinate. The polypeptide is 2,3,4,5-tetrahydropyridine-2,6-dicarboxylate N-acetyltransferase (Exiguobacterium sp. (strain ATCC BAA-1283 / AT1b)).